A 96-amino-acid polypeptide reads, in one-letter code: MSQTVWLDGEDVVLRLYIQPKASRDKILGLHGDELKIAITAPPVDGKANGHLTKLLGKWFKVAKSLVTIEKGELGRHKQVRVHTPQQIPDEVKAIL.

Belongs to the UPF0235 family.

The polypeptide is UPF0235 protein VV1_1522 (Vibrio vulnificus (strain CMCP6)).